Consider the following 202-residue polypeptide: MHVTQSSSAITPGQTAELYPGDIKSVLLTAEQIQARIAELGEQIGNDYRELSATTGQDLLMITVLKGAVLFVTDLARAIPVPTQFEFMAVSSYGSSTSSSGVVRILKDLDRDIHGRDVLIVEDVVDSGLTLSWLSRNLTSRNPRSLRVCTLLRKPDAVHANVEIAYVGFDIPNDFVVGYGLDYDERYRDLSYIGTLDPRVYQ.

2 residues coordinate diphosphate: Lys66 and Gly67. 2 residues coordinate Mg(2+): Glu122 and Asp123. The Proton acceptor role is filled by Asp126. Residues Lys154, 175 to 176, and Asp182 contribute to the GMP site; that span reads FV. Arg188 contributes to the diphosphate binding site.

It belongs to the purine/pyrimidine phosphoribosyltransferase family. The cofactor is Mg(2+).

It localises to the cytoplasm. It carries out the reaction IMP + diphosphate = hypoxanthine + 5-phospho-alpha-D-ribose 1-diphosphate. The enzyme catalyses GMP + diphosphate = guanine + 5-phospho-alpha-D-ribose 1-diphosphate. The protein operates within purine metabolism; IMP biosynthesis via salvage pathway; IMP from hypoxanthine: step 1/1. It functions in the pathway purine metabolism; GMP biosynthesis via salvage pathway; GMP from guanine: step 1/1. In terms of biological role, purine salvage pathway enzyme that catalyzes the transfer of the ribosyl-5-phosphate group from 5-phospho-alpha-D-ribose 1-diphosphate (PRPP) to the N9 position of the 6-oxopurines hypoxanthine and guanine to form the corresponding ribonucleotides IMP (inosine 5'-monophosphate) and GMP (guanosine 5'-monophosphate), with the release of PPi. This Mycobacterium tuberculosis (strain CDC 1551 / Oshkosh) protein is Hypoxanthine-guanine phosphoribosyltransferase (hpt).